The following is a 244-amino-acid chain: Phosphoadenosine 5'-phosphosulfate reductase (244 aa).

C239 (nucleophile; cysteine thiosulfonate intermediate) is an active-site residue.

This sequence belongs to the PAPS reductase family. CysH subfamily.

Its subcellular location is the cytoplasm. The catalysed reaction is [thioredoxin]-disulfide + sulfite + adenosine 3',5'-bisphosphate + 2 H(+) = [thioredoxin]-dithiol + 3'-phosphoadenylyl sulfate. It participates in sulfur metabolism; hydrogen sulfide biosynthesis; sulfite from sulfate: step 3/3. In terms of biological role, catalyzes the formation of sulfite from phosphoadenosine 5'-phosphosulfate (PAPS) using thioredoxin as an electron donor. The chain is Phosphoadenosine 5'-phosphosulfate reductase from Salmonella agona (strain SL483).